Here is a 484-residue protein sequence, read N- to C-terminus: Regulatory protein ViaA (484 aa).

It belongs to the ViaA family. As to quaternary structure, homodimer. Interacts with RavA.

The protein resides in the cytoplasm. Component of the RavA-ViaA chaperone complex, which may act on the membrane to optimize the function of some of the respiratory chains. ViaA stimulates the ATPase activity of RavA. The protein is Regulatory protein ViaA of Edwardsiella ictaluri (strain 93-146).